The following is a 137-amino-acid chain: Phospholipase A2 group V (137 aa).

Positions 1 to 20 are cleaved as a signal peptide; the sequence is MKRLLTLAWFLACSVPAVPG. Disulfide bonds link C46–C137, C48–C64, C63–C117, C70–C110, C79–C103, and C97–C108. Ca(2+) is bound by residues Y47, G49, and G51. H67 is a catalytic residue. D68 contributes to the Ca(2+) binding site. Residue D111 is part of the active site.

This sequence belongs to the phospholipase A2 family. The cofactor is Ca(2+). In terms of processing, this enzyme lacks one of the seven disulfide bonds found in similar PA2 proteins.

It is found in the secreted. Its subcellular location is the cell membrane. The protein localises to the cytoplasmic vesicle. It localises to the phagosome. The protein resides in the recycling endosome. It is found in the golgi apparatus. Its subcellular location is the cis-Golgi network. The protein localises to the trans-Golgi network. It carries out the reaction a 1,2-diacyl-sn-glycero-3-phosphocholine + H2O = a 1-acyl-sn-glycero-3-phosphocholine + a fatty acid + H(+). It catalyses the reaction 1-hexadecanoyl-2-(9Z-octadecenoyl)-sn-glycero-3-phosphocholine + H2O = 1-hexadecanoyl-sn-glycero-3-phosphocholine + (9Z)-octadecenoate + H(+). The catalysed reaction is 1-hexadecanoyl-2-(5Z,8Z,11Z,14Z-eicosatetraenoyl)-sn-glycero-3-phosphocholine + H2O = 1-hexadecanoyl-sn-glycero-3-phosphocholine + (5Z,8Z,11Z,14Z)-eicosatetraenoate + H(+). The enzyme catalyses 1-hexadecanoyl-2-(9Z,12Z-octadecadienoyl)-sn-glycero-3-phosphoethanolamine + H2O = 1-hexadecanoyl-sn-glycero-3-phosphoethanolamine + (9Z,12Z)-octadecadienoate + H(+). It carries out the reaction 1-hexadecanoyl-2-(5Z,8Z,11Z,14Z-eicosatetraenoyl)-sn-glycero-3-phosphoethanolamine + H2O = 1-hexadecanoyl-sn-glycero-3-phosphoethanolamine + (5Z,8Z,11Z,14Z)-eicosatetraenoate + H(+). It catalyses the reaction 1-octadecanoyl-2-(5Z,8Z,11Z,14Z-eicosatetraenoyl)-sn-glycero-3-phospho-(1D-myo-inositol) + H2O = 1-octadecanoyl-sn-glycero-3-phospho-(1D-myo-inositol) + (5Z,8Z,11Z,14Z)-eicosatetraenoate + H(+). The catalysed reaction is 1-hexadecanoyl-2-(9Z-octadecenoyl)-sn-glycero-3-phosphoglycerol + H2O = 1-hexadecanoyl-sn-glycero-3-phosphoglycerol + (9Z)-octadecenoate + H(+). The enzyme catalyses N-hexadecanoyl-1,2-di-(9Z-octadecenoyl)-sn-glycero-3-phosphoethanolamine + H2O = N-hexadecanoyl-1-(9Z-octadecenoyl)-sn-glycero-3-phosphoethanolamine + (9Z)-octadecenoate + H(+). It carries out the reaction 1'-[1,2-di-(9Z-octadecenoyl)-sn-glycero-3-phospho]-3'-[1-(9Z-octadecenoyl)-sn-glycero-3-phospho]-glycerol + H2O = 1',3'-bis-[1-(9Z-octadecenoyl)-sn-glycero-3-phospho]-glycerol + (9Z)-octadecenoate + H(+). It catalyses the reaction 1',3'-bis[1,2-di-(9Z-octadecenoyl)-sn-glycero-3-phospho]-glycerol + H2O = 1'-[1,2-di-(9Z-octadecenoyl)-sn-glycero-3-phospho]-3'-[1-(9Z-octadecenoyl)-sn-glycero-3-phospho]-glycerol + (9Z)-octadecenoate + H(+). Its pathway is lipid metabolism; phospholipid metabolism. The protein operates within lipid metabolism; leukotriene B4 biosynthesis. It functions in the pathway lipid metabolism; leukotriene C4 biosynthesis. Its function is as follows. Secretory calcium-dependent phospholipase A2 that primarily targets extracellular phospholipids. Hydrolyzes the ester bond of the fatty acyl group attached at sn-2 position of phospholipids (phospholipase A2 activity), preferentially releasing fatty acyl groups with a low degree of unsaturation such as oleoyl (C18:1) and linoleoyl (C18:2) groups. Hydrolyzes low-density lipoprotein (LDL) phospholipids releasing unsaturated fatty acids that drive macrophage polarization toward an M2 phenotype. May act in an autocrine and paracrine manner. Contributes to lipid remodeling of cellular membranes at different subcellular locations and generation of lipid mediators involved in pathogen clearance. Cleaves sn-2 fatty acyl chains of cardiolipin, a major component of the inner membrane of mitochondria and bacterial membranes. Promotes phagocytosis of bacteria in macrophages through production of lysophosphatidylethanolamines. Displays bactericidal activity against Gram-positive bacteria by directly hydrolyzing phospholipids of the bacterial membrane. Promotes phagocytosis and killing of ingested fungi likely through controlling phagosome-lysosome fusion and phagosome maturation. Plays a role in biosynthesis of cysteinyl leukotrienes (CysLTs) in myeloid cells. In eosinophils, triggers perinuclear arachidonate release and LTC4 synthesis in a PLA2G4A-independent way. In neutrophils, amplifies CysLTs biosynthesis initiated by PLA2G4A. Promotes immune complex clearance in macrophages via stimulating synthesis of CysLTs, which act through CYSLTR1 to trigger phagocytosis. May regulate antigen processing in antigen-presenting cells. In pulmonary macrophages regulates IL33 production required for activation of group 2 innate lymphoid cells. May play a role in the biosynthesis of N-acyl ethanolamines that regulate energy metabolism. Hydrolyzes N-acyl phosphatidylethanolamines to N-acyl lysophosphatidylethanolamines, which are further cleaved by a lysophospholipase D to release N-acyl ethanolamines. The polypeptide is Phospholipase A2 group V (Pla2g5) (Rattus norvegicus (Rat)).